Here is a 321-residue protein sequence, read N- to C-terminus: L-carnitine dehydrogenase (321 aa).

14 to 19 (GAGVIG) serves as a coordination point for NAD(+).

The protein belongs to the 3-hydroxyacyl-CoA dehydrogenase family. L-carnitine dehydrogenase subfamily. Homodimer.

Its subcellular location is the cytoplasm. It catalyses the reaction carnitine + NAD(+) = 3-dehydrocarnitine + NADH + H(+). It participates in amine and polyamine metabolism; carnitine metabolism. Catalyzes the NAD(+)-dependent oxidation of L-carnitine to 3-dehydrocarnitine. This chain is L-carnitine dehydrogenase, found in Burkholderia mallei (strain ATCC 23344).